A 240-amino-acid polypeptide reads, in one-letter code: Putative exosome complex component RRP41 (240 aa).

The protein belongs to the RNase PH family. Component of the RNA exosome complex.

The protein localises to the cytoplasm. The protein resides in the nucleus. It localises to the nucleolus. It is found in the nucleoplasm. Non-catalytic component of the RNA exosome complex which has 3'-&gt;5' exoribonuclease activity and participates in a multitude of cellular RNA processing and degradation events. This is Putative exosome complex component RRP41 (exos-4.1) from Caenorhabditis briggsae.